The chain runs to 428 residues: Tyrosine--tRNA ligase (428 aa).

Position 41 (Y41) interacts with L-tyrosine. A 'HIGH' region motif is present at residues 46-55 (PTADSLHLGH). L-tyrosine is bound by residues Y179 and Q183. The short motif at 239 to 243 (KFGKT) is the 'KMSKS' region element. Residue K242 participates in ATP binding. Positions 361–418 (ADLMQALVDAELQPSRGQARKTIASNAVTINGEKQSDPEYIFNDEDRLFGRYTLLRRG) constitute an S4 RNA-binding domain.

It belongs to the class-I aminoacyl-tRNA synthetase family. TyrS type 1 subfamily. Homodimer.

Its subcellular location is the cytoplasm. The catalysed reaction is tRNA(Tyr) + L-tyrosine + ATP = L-tyrosyl-tRNA(Tyr) + AMP + diphosphate + H(+). In terms of biological role, catalyzes the attachment of tyrosine to tRNA(Tyr) in a two-step reaction: tyrosine is first activated by ATP to form Tyr-AMP and then transferred to the acceptor end of tRNA(Tyr). This is Tyrosine--tRNA ligase from Salmonella paratyphi C (strain RKS4594).